The primary structure comprises 242 residues: MSKQPENSFSSDKFFPIKQKLALEAVALVEPGMCVGLGSGSTAREFILALGDRVRTERLVITAVASSRISQLLAEAVGIPLLDHSLLQDVDLVVDGADEVDPCLRMIKGGGGALFREKILLQSGKRNVILVDERKLVPTLGKFSLPIEIAPFGCSSVQRILNKQGYFGEWRETSAGERFITDNGNYIYDVRTPDSYANPEEDMIRLLQIRGIIDVGFVIAKAEVWVGYADGSIVRKKEHNEY.

Residues 39–42, 95–98, and 108–111 contribute to the substrate site; these read SGST, DGAD, and KGGG. The active-site Proton acceptor is Glu117. Lys135 contacts substrate.

This sequence belongs to the ribose 5-phosphate isomerase family. In terms of assembly, homodimer.

It catalyses the reaction aldehydo-D-ribose 5-phosphate = D-ribulose 5-phosphate. It participates in carbohydrate degradation; pentose phosphate pathway; D-ribose 5-phosphate from D-ribulose 5-phosphate (non-oxidative stage): step 1/1. Functionally, catalyzes the reversible conversion of ribose-5-phosphate to ribulose 5-phosphate. The protein is Ribose-5-phosphate isomerase A of Chlamydia trachomatis serovar L2 (strain ATCC VR-902B / DSM 19102 / 434/Bu).